Consider the following 180-residue polypeptide: Large ribosomal subunit protein uL5 (180 aa).

The protein belongs to the universal ribosomal protein uL5 family. Part of the 50S ribosomal subunit; part of the 5S rRNA/L5/L18/L25 subcomplex. Contacts the 5S rRNA and the P site tRNA. Forms a bridge to the 30S subunit in the 70S ribosome.

This is one of the proteins that bind and probably mediate the attachment of the 5S RNA into the large ribosomal subunit, where it forms part of the central protuberance. In the 70S ribosome it contacts protein S13 of the 30S subunit (bridge B1b), connecting the 2 subunits; this bridge is implicated in subunit movement. Contacts the P site tRNA; the 5S rRNA and some of its associated proteins might help stabilize positioning of ribosome-bound tRNAs. This chain is Large ribosomal subunit protein uL5, found in Ligilactobacillus salivarius (strain UCC118) (Lactobacillus salivarius).